The chain runs to 165 residues: GPI-anchored protein LORELEI (165 aa).

The N-terminal stretch at 1 to 20 (MELILLFFFLMALLVSLSSS) is a signal peptide. The interval 82-93 (PYVSQINDMNSD) is required for its function in pollen tube reception. Asn137 carries an N-linked (GlcNAc...) asparagine glycan. The GPI-anchor amidated serine moiety is linked to residue Ser139. Residues 140–165 (TADSTPRFISLLISAATAVFALLVLT) constitute a propeptide, removed in mature form.

As to quaternary structure, interacts with FER. In terms of tissue distribution, expressed in leaves, buds, flowers and stems. Highest expression in the synergid cells of the female gametophyte.

It localises to the cell membrane. Female gametophyte-specific component of the signaling pathway required for fertilization. Required for reception of the pollen tube by the female gametophyte. Acts specifically at the synergid cell surface for pollen tube reception. Plays a role in double fertilization and early seed development. Component of the FER-regulated Rho GTPase signaling complex. Acts as a chaperone and coreceptor for FER. Required for localization of FER to the plasma membrane. This chain is GPI-anchored protein LORELEI (LRE), found in Arabidopsis thaliana (Mouse-ear cress).